The sequence spans 238 residues: Large ribosomal subunit protein uL1 (238 aa).

Belongs to the universal ribosomal protein uL1 family. Part of the 50S ribosomal subunit.

Its function is as follows. Binds directly to 23S rRNA. The L1 stalk is quite mobile in the ribosome, and is involved in E site tRNA release. Functionally, protein L1 is also a translational repressor protein, it controls the translation of the L11 operon by binding to its mRNA. The chain is Large ribosomal subunit protein uL1 from Saccharopolyspora erythraea (strain ATCC 11635 / DSM 40517 / JCM 4748 / NBRC 13426 / NCIMB 8594 / NRRL 2338).